The chain runs to 1162 residues: Carbamoyl phosphate synthase large chain (1162 aa).

Residues Met1–Glu456 are carboxyphosphate synthetic domain. ATP is bound by residues Arg129, Arg222, Gly228, Gly229, Glu261, Val263, Glu268, Gly294, Val295, His296, Gln338, and Glu352. The region spanning Glu186 to Val381 is the ATP-grasp 1 domain. The Mg(2+) site is built by Gln338, Glu352, and Asn354. Gln338, Glu352, and Asn354 together coordinate Mn(2+). The segment at Thr457 to Ala613 is oligomerization domain. The interval Glu614–Gly1025 is carbamoyl phosphate synthetic domain. Positions Gln742–Ala954 constitute an ATP-grasp 2 domain. Residues Arg778, Thr838, Leu840, Glu845, Gly870, Ile871, His872, Ser873, Gln913, and Glu925 each coordinate ATP. Residues Gln913, Glu925, and Asn927 each contribute to the Mg(2+) site. 3 residues coordinate Mn(2+): Gln913, Glu925, and Asn927. Residues Val1026–Ser1162 enclose the MGS-like domain. The tract at residues Val1026–Ser1162 is allosteric domain.

Belongs to the CarB family. Composed of two chains; the small (or glutamine) chain promotes the hydrolysis of glutamine to ammonia, which is used by the large (or ammonia) chain to synthesize carbamoyl phosphate. Tetramer of heterodimers (alpha,beta)4. Mg(2+) is required as a cofactor. It depends on Mn(2+) as a cofactor.

The enzyme catalyses hydrogencarbonate + L-glutamine + 2 ATP + H2O = carbamoyl phosphate + L-glutamate + 2 ADP + phosphate + 2 H(+). It carries out the reaction hydrogencarbonate + NH4(+) + 2 ATP = carbamoyl phosphate + 2 ADP + phosphate + 2 H(+). It participates in amino-acid biosynthesis; L-arginine biosynthesis; carbamoyl phosphate from bicarbonate: step 1/1. Its pathway is pyrimidine metabolism; UMP biosynthesis via de novo pathway; (S)-dihydroorotate from bicarbonate: step 1/3. Large subunit of the glutamine-dependent carbamoyl phosphate synthetase (CPSase). CPSase catalyzes the formation of carbamoyl phosphate from the ammonia moiety of glutamine, carbonate, and phosphate donated by ATP, constituting the first step of 2 biosynthetic pathways, one leading to arginine and/or urea and the other to pyrimidine nucleotides. The large subunit (synthetase) binds the substrates ammonia (free or transferred from glutamine from the small subunit), hydrogencarbonate and ATP and carries out an ATP-coupled ligase reaction, activating hydrogencarbonate by forming carboxy phosphate which reacts with ammonia to form carbamoyl phosphate. This chain is Carbamoyl phosphate synthase large chain, found in Brucella suis biovar 1 (strain 1330).